The following is a 151-amino-acid chain: Small ribosomal subunit protein uS13 (151 aa).

This sequence belongs to the universal ribosomal protein uS13 family. Part of the 30S ribosomal subunit. Forms a loose heterodimer with protein S19. Forms two bridges to the 50S subunit in the 70S ribosome.

Its function is as follows. Located at the top of the head of the 30S subunit, it contacts several helices of the 16S rRNA. In the 70S ribosome it contacts the 23S rRNA (bridge B1a) and protein L5 of the 50S subunit (bridge B1b), connecting the 2 subunits; these bridges are implicated in subunit movement. In Staphylothermus marinus (strain ATCC 43588 / DSM 3639 / JCM 9404 / F1), this protein is Small ribosomal subunit protein uS13.